A 236-amino-acid polypeptide reads, in one-letter code: RNA-binding protein 24 (236 aa).

The 78-residue stretch at 11–88 (TKIFVGGLPY…RKANVNLAYL (78 aa)) folds into the RRM domain. Residues 175-199 (QYPYAASPAAAGYVTTGGYSYAVQQ) form a necessary for interaction with EIF4E region.

In terms of assembly, interacts with EIF4E; this interaction prevents EIF4E from binding to p53/TP53 mRNA and inhibits the assembly of translation initiation complex. Expressed strongly in heart and skeletal muscles. Weakly expressed in intestine, aorta, liver, lung, kidney, uterus and bladder.

Its subcellular location is the nucleus. It is found in the cytoplasm. Multifunctional RNA-binding protein involved in the regulation of pre-mRNA splicing, mRNA stability and mRNA translation important for cell fate decision and differentiation. Plays a major role in pre-mRNA alternative splicing regulation. Mediates preferentially muscle-specific exon inclusion in numerous mRNAs important for striated cardiac and skeletal muscle cell differentiation. Binds to intronic splicing enhancer (ISE) composed of stretches of GU-rich motifs localized in flanking intron of exon that will be included by alternative splicing. Involved in embryonic stem cell (ESC) transition to cardiac cell differentiation by promoting pre-mRNA alternative splicing events of several pluripotency and/or differentiation genes. Plays a role in the regulation of mRNA stability. Binds to 3'-untranslated region (UTR) AU-rich elements in target transcripts, such as CDKN1A and MYOG, leading to maintain their stabilities. Involved in myogenic differentiation by regulating MYOG levels. Binds to multiple regions in the mRNA 3'-UTR of TP63, hence inducing its destabilization. Also promotes the destabilization of the CHRM2 mRNA via its binding to a region in the coding sequence. Plays a role in the regulation of mRNA translation. Mediates repression of p53/TP53 mRNA translation through its binding to U-rich element in the 3'-UTR, hence preventing EIF4E from binding to p53/TP53 mRNA and translation initiation. Binds to a huge amount of mRNAs. Required for embryonic heart development, sarcomer and M-band formation in striated muscles. Together with RBM20, promotes the expression of short isoforms of PDLIM5/ENH in cardiomyocytes. The polypeptide is RNA-binding protein 24 (Mus musculus (Mouse)).